The chain runs to 227 residues: Cytochrome c oxidase subunit 2 (227 aa).

Topologically, residues 1–14 are mitochondrial intermembrane; it reads MAYPFQLGLQDATS. The chain crosses the membrane as a helical span at residues 15-45; that stretch reads PIMEELTNFHDHTLMIVFLISSLVLYLISLM. Residues 46–59 are Mitochondrial matrix-facing; that stretch reads LSTKLIHTSTMDAQ. The helical transmembrane segment at 60-87 threads the bilayer; it reads EVETIWTILPAIILIMIALPSLRILYMM. Topologically, residues 88 to 227 are mitochondrial intermembrane; it reads DEINNPALTV…LFENWSISMS (140 aa). Residues His161, Cys196, Glu198, Cys200, His204, and Met207 each contribute to the Cu cation site. Glu198 provides a ligand contact to Mg(2+).

The protein belongs to the cytochrome c oxidase subunit 2 family. As to quaternary structure, component of the cytochrome c oxidase (complex IV, CIV), a multisubunit enzyme composed of 14 subunits. The complex is composed of a catalytic core of 3 subunits MT-CO1, MT-CO2 and MT-CO3, encoded in the mitochondrial DNA, and 11 supernumerary subunits COX4I, COX5A, COX5B, COX6A, COX6B, COX6C, COX7A, COX7B, COX7C, COX8 and NDUFA4, which are encoded in the nuclear genome. The complex exists as a monomer or a dimer and forms supercomplexes (SCs) in the inner mitochondrial membrane with NADH-ubiquinone oxidoreductase (complex I, CI) and ubiquinol-cytochrome c oxidoreductase (cytochrome b-c1 complex, complex III, CIII), resulting in different assemblies (supercomplex SCI(1)III(2)IV(1) and megacomplex MCI(2)III(2)IV(2)). Found in a complex with TMEM177, COA6, COX18, COX20, SCO1 and SCO2. Interacts with TMEM177 in a COX20-dependent manner. Interacts with COX20. Interacts with COX16. Cu cation is required as a cofactor.

Its subcellular location is the mitochondrion inner membrane. It catalyses the reaction 4 Fe(II)-[cytochrome c] + O2 + 8 H(+)(in) = 4 Fe(III)-[cytochrome c] + 2 H2O + 4 H(+)(out). Its function is as follows. Component of the cytochrome c oxidase, the last enzyme in the mitochondrial electron transport chain which drives oxidative phosphorylation. The respiratory chain contains 3 multisubunit complexes succinate dehydrogenase (complex II, CII), ubiquinol-cytochrome c oxidoreductase (cytochrome b-c1 complex, complex III, CIII) and cytochrome c oxidase (complex IV, CIV), that cooperate to transfer electrons derived from NADH and succinate to molecular oxygen, creating an electrochemical gradient over the inner membrane that drives transmembrane transport and the ATP synthase. Cytochrome c oxidase is the component of the respiratory chain that catalyzes the reduction of oxygen to water. Electrons originating from reduced cytochrome c in the intermembrane space (IMS) are transferred via the dinuclear copper A center (CU(A)) of subunit 2 and heme A of subunit 1 to the active site in subunit 1, a binuclear center (BNC) formed by heme A3 and copper B (CU(B)). The BNC reduces molecular oxygen to 2 water molecules using 4 electrons from cytochrome c in the IMS and 4 protons from the mitochondrial matrix. The polypeptide is Cytochrome c oxidase subunit 2 (MT-CO2) (Gerbilliscus robustus (Fringe-tailed gerbil)).